A 442-amino-acid chain; its full sequence is D-serine dehydratase (442 aa).

Lys118 is modified (N6-(pyridoxal phosphate)lysine).

The protein belongs to the serine/threonine dehydratase family. DsdA subfamily. In terms of assembly, monomer. Requires pyridoxal 5'-phosphate as cofactor.

The enzyme catalyses D-serine = pyruvate + NH4(+). This chain is D-serine dehydratase, found in Shigella flexneri.